We begin with the raw amino-acid sequence, 250 residues long: Ribosomal RNA small subunit methyltransferase J (250 aa).

S-adenosyl-L-methionine is bound by residues 101–102 (RD), 117–118 (ER), 153–154 (SS), and Asp-171.

This sequence belongs to the methyltransferase superfamily. RsmJ family.

The protein localises to the cytoplasm. The enzyme catalyses guanosine(1516) in 16S rRNA + S-adenosyl-L-methionine = N(2)-methylguanosine(1516) in 16S rRNA + S-adenosyl-L-homocysteine + H(+). In terms of biological role, specifically methylates the guanosine in position 1516 of 16S rRNA. The chain is Ribosomal RNA small subunit methyltransferase J from Escherichia coli O81 (strain ED1a).